Reading from the N-terminus, the 378-residue chain is UPF0754 membrane protein BCG9842_B4423 (378 aa).

A helical transmembrane segment spans residues 357-377 (YLGALLGGIIGLVQGLLLLFL).

This sequence belongs to the UPF0754 family.

Its subcellular location is the cell membrane. The chain is UPF0754 membrane protein BCG9842_B4423 from Bacillus cereus (strain G9842).